Here is a 108-residue protein sequence, read N- to C-terminus: Small ribosomal subunit protein uS10 (108 aa).

Belongs to the universal ribosomal protein uS10 family. As to quaternary structure, part of the 30S ribosomal subunit.

Involved in the binding of tRNA to the ribosomes. The polypeptide is Small ribosomal subunit protein uS10 (Ehrlichia canis (strain Jake)).